A 115-amino-acid chain; its full sequence is MESITVFSAGSFCYALQELSDIFRQIHHIEIKAFCGPAGILRQQIEQGNRGDIFISANPGNVLQLADSKKIYQKLTIAFNQLALTTLNLEHFRHKSIFELLFDRSFLGVKNVSKY.

This is an uncharacterized protein from Haemophilus influenzae (strain ATCC 51907 / DSM 11121 / KW20 / Rd).